Reading from the N-terminus, the 338-residue chain is 2-methyl-6-phytyl-1,4-hydroquinone methyltransferase, chloroplastic (338 aa).

The transit peptide at 1-51 directs the protein to the chloroplast; sequence MASLMLNGAITFPKGLGSPGSNLHARSIPRPTLLSVTRTSTPRLSVATRCS. Residues 52–307 lie on the Chloroplast intermembrane side of the membrane; the sequence is SSSVSSSRPS…VNNPFSFLGR (256 aa). Residues 114-123 form an SAM motif I region; it reads VVDVGGGTGF. Residues 159-172 form an SAM motif II region; the sequence is CKIVEGDAEDLPFP. Positions 200-213 are SAM motif III; sequence RVLKIGGKACLIGP. A helical membrane pass occupies residues 308–328; it reads FLLGTLAAAWFVLIPIYMWIK. Over 329–338 the chain is Stromal; sequence DQIVPKDQPI.

It belongs to the class I-like SAM-binding methyltransferase superfamily. MPBQ/MBSQ MT family.

Its subcellular location is the plastid. It is found in the chloroplast inner membrane. It catalyses the reaction 2-methyl-6-phytyl-1,4-benzene-1,4-diol + S-adenosyl-L-methionine = 2,3-dimethyl-6-phytylbenzene-1,4-diol + S-adenosyl-L-homocysteine + H(+). It carries out the reaction 2-methyl-6-(all-trans-nonaprenyl)benzene-1,4-diol + S-adenosyl-L-methionine = plastoquinol-9 + S-adenosyl-L-homocysteine + H(+). The enzyme catalyses 6-geranylgeranyl-2-methylbenzene-1,4-diol + S-adenosyl-L-methionine = 6-geranylgeranyl-2,3-dimethylbenzene-1,4-diol + S-adenosyl-L-homocysteine + H(+). Its pathway is cofactor biosynthesis; tocopherol biosynthesis. Involved in a key methylation step in both tocopherols (vitamin E) and plastoquinone synthesis. Catalyzes the conversion of 2-methyl-6-phytyl-1,4-hydroquinone (MPBQ) to 2,3-dimethyl-6-phytyl-1,4-hydroquinone (DMPQ, a substrate for tocopherol cyclase), and 2-methyl-6-solanyl-1,4-benzoquinone (MSBQ) to plastoquinone. The polypeptide is 2-methyl-6-phytyl-1,4-hydroquinone methyltransferase, chloroplastic (VTE3) (Arabidopsis thaliana (Mouse-ear cress)).